Consider the following 241-residue polypeptide: Fatty acid metabolism regulator protein (241 aa).

One can recognise an HTH gntR-type domain in the interval 6-74 (KGPASFAEKY…HGKPTRVNNF (69 aa)). A DNA-binding region (H-T-H motif) is located at residues 34-53 (ERELSELIGVTRTTLREVLQ).

Homodimer.

The protein resides in the cytoplasm. Functionally, multifunctional regulator of fatty acid metabolism. The chain is Fatty acid metabolism regulator protein from Shewanella sp. (strain MR-4).